The primary structure comprises 1015 residues: GTPase-activating Rap/Ran-GAP domain-like protein 3 (1015 aa).

The region spanning L200 to L416 is the Rap-GAP domain. Positions P498–Y812 constitute a CNH domain. 2 disordered regions span residues S821–Y842 and E924–S1004. Over residues S823–S835 the composition is skewed to low complexity. Basic and acidic residues predominate over residues K949–A959.

The protein belongs to the GARNL3 family.

The polypeptide is GTPase-activating Rap/Ran-GAP domain-like protein 3 (garnl3) (Danio rerio (Zebrafish)).